Here is a 318-residue protein sequence, read N- to C-terminus: Homoserine kinase (318 aa).

Residue 97–107 participates in ATP binding; that stretch reads PIGSGLGSSAC.

The protein belongs to the GHMP kinase family. Homoserine kinase subfamily.

The protein resides in the cytoplasm. It carries out the reaction L-homoserine + ATP = O-phospho-L-homoserine + ADP + H(+). The protein operates within amino-acid biosynthesis; L-threonine biosynthesis; L-threonine from L-aspartate: step 4/5. In terms of biological role, catalyzes the ATP-dependent phosphorylation of L-homoserine to L-homoserine phosphate. In Vibrio vulnificus (strain CMCP6), this protein is Homoserine kinase.